Reading from the N-terminus, the 418-residue chain is Probable serine hydroxymethyltransferase (418 aa).

Residues leucine 118 and 122 to 124 (GHL) contribute to the (6S)-5,6,7,8-tetrahydrofolate site. Lysine 226 is modified (N6-(pyridoxal phosphate)lysine). 351-353 (SPF) lines the (6S)-5,6,7,8-tetrahydrofolate pocket.

It belongs to the SHMT family. Homodimer. The cofactor is pyridoxal 5'-phosphate.

The protein resides in the cytoplasm. It catalyses the reaction (6R)-5,10-methylene-5,6,7,8-tetrahydrofolate + glycine + H2O = (6S)-5,6,7,8-tetrahydrofolate + L-serine. Its pathway is one-carbon metabolism; tetrahydrofolate interconversion. In terms of biological role, catalyzes the reversible interconversion of serine and glycine with tetrahydrofolate (THF) serving as the one-carbon carrier. This reaction serves as the major source of one-carbon groups required for the biosynthesis of purines, thymidylate, methionine, and other important biomolecules. The polypeptide is Probable serine hydroxymethyltransferase (Mesomycoplasma hyopneumoniae (strain 232) (Mycoplasma hyopneumoniae)).